The chain runs to 521 residues: Phosphoenolpyruvate carboxykinase (ATP) (521 aa).

Residues arginine 52, tyrosine 186, and lysine 192 each contribute to the substrate site. Residues lysine 192, histidine 211, and 227 to 235 (GLSGTGKTT) each bind ATP. The Mn(2+) site is built by lysine 192 and histidine 211. Aspartate 248 lines the Mn(2+) pocket. Residues glutamate 276, arginine 313, 432 to 433 (RI), and threonine 438 each bind ATP. Substrate is bound at residue arginine 313.

Belongs to the phosphoenolpyruvate carboxykinase (ATP) family. Requires Mn(2+) as cofactor.

It is found in the cytoplasm. It carries out the reaction oxaloacetate + ATP = phosphoenolpyruvate + ADP + CO2. The protein operates within carbohydrate biosynthesis; gluconeogenesis. Its function is as follows. Involved in the gluconeogenesis. Catalyzes the conversion of oxaloacetate (OAA) to phosphoenolpyruvate (PEP) through direct phosphoryl transfer between the nucleoside triphosphate and OAA. This Caldanaerobacter subterraneus subsp. tengcongensis (strain DSM 15242 / JCM 11007 / NBRC 100824 / MB4) (Thermoanaerobacter tengcongensis) protein is Phosphoenolpyruvate carboxykinase (ATP).